We begin with the raw amino-acid sequence, 1492 residues long: Copper-transporting ATPase 1 (1492 aa).

Residues 1–645 (MEPNMDANSI…KREIKQWRGS (645 aa)) lie on the Cytoplasmic side of the membrane. 2 HMA domains span residues 8 to 74 (NSIT…FDAL) and 85 to 151 (TNTV…LDMG). Positions 18, 19, and 22 each coordinate Cu(+). At Thr-152 the chain carries Phosphothreonine. An HMA 3 domain is found at 171–237 (VLLKMRVEGM…QIEAVGFPAF (67 aa)). Residues Cys-182 and Cys-185 each coordinate Cu(+). A Phosphoserine modification is found at Ser-270. In terms of domain architecture, HMA 4 spans 277–343 (SAITFTIDGM…AIEAVSPGQY (67 aa)). Cys-288 and Cys-291 together coordinate Cu(+). Residue Thr-327 is modified to Phosphothreonine. Phosphoserine occurs at positions 339, 353, 357, and 362. HMA domains lie at 377–443 (QEVV…FDAV), 480–546 (NKCY…FGAV), and 556–622 (GILE…FEAS). The Cu(+) site is built by Cys-388, Cys-391, Cys-491, Cys-494, Cys-567, and Cys-570. The chain crosses the membrane as a helical span at residues 646 to 667 (FLVSLFFCIPVMGLMIYMMVMD). Over 668–706 (HHLATLNHNQNMSNEEMINMHSSMFLERQILPGLSIMNL) the chain is Extracellular. An N-linked (GlcNAc...) asparagine glycan is attached at Asn-678. Residues 707 to 726 (LSLLLCLPVQFCGGWYFYIQ) form a helical membrane-spanning segment. Topologically, residues 727–733 (AYKALRH) are cytoplasmic. A helical membrane pass occupies residues 734-754 (KTANMDVLIVLATTIAFAYSL). At 755–773 (VILLVAMYERAKVNPITFF) the chain is on the extracellular side. A helical membrane pass occupies residues 774 to 794 (DTPPMLFVFIALGRWLEHIAK). Residues 795 to 927 (GKTSEALAKL…SKAPIQQFAD (133 aa)) lie on the Cytoplasmic side of the membrane. Residues 928 to 951 (KLSGYFVPFIVLVSIVTLLVWIII) traverse the membrane as a helical segment. Over 952–981 (GFQNFEIVEAYFPGYNRSISRTETIIRFAF) the chain is Extracellular. Residues 982 to 1003 (QASITVLCIACPCSLGLATPTA) traverse the membrane as a helical segment. At 1004 to 1348 (VMVGTGVGAQ…LSRKTVKRIR (345 aa)) the chain is on the cytoplasmic side. The active-site 4-aspartylphosphate intermediate is the Asp-1036. An ATP-binding site is contributed by Glu-1073. The residue at position 1204 (Thr-1204) is a Phosphothreonine. 2 residues coordinate Mg(2+): Asp-1293 and Asp-1297. Residues 1349–1366 (INFVFALIYNLIGIPIAA) traverse the membrane as a helical segment. Residues 1367 to 1377 (GVFLPIGLVLQ) are Extracellular-facing. A helical membrane pass occupies residues 1378 to 1397 (PWMGSAAMAASSVSVVLSSL). Residues 1398 to 1492 (FLKLYRKPTY…DFREDDDTTL (95 aa)) lie on the Cytoplasmic side of the membrane. 5 positions are modified to phosphoserine: Ser-1422, Ser-1424, Ser-1452, Ser-1455, and Ser-1458. Positions 1459–1460 (LL) match the Endocytosis signal motif. Residues Ser-1461, Ser-1465, Ser-1468, and Ser-1478 each carry the phosphoserine modification. The interval 1478 to 1492 (SLLVGDFREDDDTTL) is PDZD11-binding. Residues 1479-1480 (LL) carry the Endocytosis signal motif.

It belongs to the cation transport ATPase (P-type) (TC 3.A.3) family. Type IB subfamily. Monomer. Interacts with PDZD11. Interacts with ATOX1 and COMMD1. Interacts with TYRP1. Directly interacts with SOD3; this interaction is copper-dependent and is required for SOD3 activity. In terms of tissue distribution, expressed in hippocampal neuron (at protein level). Expressed in anterior pituitary gland (at protein level).

The protein localises to the golgi apparatus. It is found in the trans-Golgi network membrane. The protein resides in the cell membrane. Its subcellular location is the melanosome membrane. It localises to the early endosome membrane. The protein localises to the cell projection. It is found in the axon. The protein resides in the dendrite. Its subcellular location is the postsynaptic density. The catalysed reaction is Cu(+)(in) + ATP + H2O = Cu(+)(out) + ADP + phosphate + H(+). In terms of biological role, ATP-driven copper (Cu(+)) ion pump that plays an important role in intracellular copper ion homeostasis. Within a catalytic cycle, acquires Cu(+) ion from donor protein on the cytoplasmic side of the membrane and delivers it to acceptor protein on the lumenal side. The transfer of Cu(+) ion across the membrane is coupled to ATP hydrolysis and is associated with a transient phosphorylation that shifts the pump conformation from inward-facing to outward-facing state. Under physiological conditions, at low cytosolic copper concentration, it is localized at the trans-Golgi network (TGN) where it transfers Cu(+) ions to cuproenzymes of the secretory pathway. Upon elevated cytosolic copper concentrations, it relocalizes to the plasma membrane where it is responsible for the export of excess Cu(+) ions. May play a dual role in neuron function and survival by regulating cooper efflux and neuronal transmission at the synapse as well as by supplying Cu(+) ions to enzymes such as PAM, TYR and SOD3. In the melanosomes of pigmented cells, provides copper cofactor to TYR to form an active TYR holoenzyme for melanin biosynthesis. This Rattus norvegicus (Rat) protein is Copper-transporting ATPase 1.